The sequence spans 347 residues: Protein RecA (347 aa).

68–75 (GPESSGKT) is a binding site for ATP.

It belongs to the RecA family.

It localises to the cytoplasm. Functionally, can catalyze the hydrolysis of ATP in the presence of single-stranded DNA, the ATP-dependent uptake of single-stranded DNA by duplex DNA, and the ATP-dependent hybridization of homologous single-stranded DNAs. It interacts with LexA causing its activation and leading to its autocatalytic cleavage. This Mycobacterium sp. (strain JLS) protein is Protein RecA.